A 471-amino-acid chain; its full sequence is Ribulose bisphosphate carboxylase large chain (471 aa).

Lys5 carries the N6,N6,N6-trimethyllysine modification. Substrate is bound by residues Asn114 and Thr164. Residue Lys166 is the Proton acceptor of the active site. Lys168 lines the substrate pocket. Positions 192, 194, and 195 each coordinate Mg(2+). Position 192 is an N6-carboxylysine (Lys192). The active-site Proton acceptor is His285. 3 residues coordinate substrate: Arg286, His318, and Ser370.

Belongs to the RuBisCO large chain family. Type I subfamily. In terms of assembly, heterohexadecamer of 8 large chains and 8 small chains; disulfide-linked. The disulfide link is formed within the large subunit homodimers. The cofactor is Mg(2+). In terms of processing, the disulfide bond which can form in the large chain dimeric partners within the hexadecamer appears to be associated with oxidative stress and protein turnover.

It is found in the plastid. The protein localises to the chloroplast. The enzyme catalyses 2 (2R)-3-phosphoglycerate + 2 H(+) = D-ribulose 1,5-bisphosphate + CO2 + H2O. It carries out the reaction D-ribulose 1,5-bisphosphate + O2 = 2-phosphoglycolate + (2R)-3-phosphoglycerate + 2 H(+). RuBisCO catalyzes two reactions: the carboxylation of D-ribulose 1,5-bisphosphate, the primary event in carbon dioxide fixation, as well as the oxidative fragmentation of the pentose substrate in the photorespiration process. Both reactions occur simultaneously and in competition at the same active site. In Strychnos nux-vomica (Poison nut), this protein is Ribulose bisphosphate carboxylase large chain.